We begin with the raw amino-acid sequence, 225 residues long: Cytochrome c oxidase subunit 2 (225 aa).

Over 1-25 (MSTWMMFMFQESNSLYADNLVSFHN) the chain is Mitochondrial intermembrane. A helical transmembrane segment spans residues 26–47 (MVMIIVIMISTLTVYIIFDLFL). The Mitochondrial matrix portion of the chain corresponds to 48 to 62 (NKFSNLYLLKNHNIE). A helical transmembrane segment spans residues 63 to 82 (IIWMIVPIVILLIICFPSLK). The Mitochondrial intermembrane portion of the chain corresponds to 83–225 (ILYLIDEIVN…YFMNWIYKMN (143 aa)). The Cu cation site is built by histidine 159, cysteine 194, glutamate 196, cysteine 198, histidine 202, and methionine 205. Glutamate 196 serves as a coordination point for Mg(2+).

It belongs to the cytochrome c oxidase subunit 2 family. Component of the cytochrome c oxidase (complex IV, CIV), a multisubunit enzyme composed of a catalytic core of 3 subunits and several supernumerary subunits. The complex exists as a monomer or a dimer and forms supercomplexes (SCs) in the inner mitochondrial membrane with ubiquinol-cytochrome c oxidoreductase (cytochrome b-c1 complex, complex III, CIII). The cofactor is Cu cation.

It is found in the mitochondrion inner membrane. It carries out the reaction 4 Fe(II)-[cytochrome c] + O2 + 8 H(+)(in) = 4 Fe(III)-[cytochrome c] + 2 H2O + 4 H(+)(out). Component of the cytochrome c oxidase, the last enzyme in the mitochondrial electron transport chain which drives oxidative phosphorylation. The respiratory chain contains 3 multisubunit complexes succinate dehydrogenase (complex II, CII), ubiquinol-cytochrome c oxidoreductase (cytochrome b-c1 complex, complex III, CIII) and cytochrome c oxidase (complex IV, CIV), that cooperate to transfer electrons derived from NADH and succinate to molecular oxygen, creating an electrochemical gradient over the inner membrane that drives transmembrane transport and the ATP synthase. Cytochrome c oxidase is the component of the respiratory chain that catalyzes the reduction of oxygen to water. Electrons originating from reduced cytochrome c in the intermembrane space (IMS) are transferred via the dinuclear copper A center (CU(A)) of subunit 2 and heme A of subunit 1 to the active site in subunit 1, a binuclear center (BNC) formed by heme A3 and copper B (CU(B)). The BNC reduces molecular oxygen to 2 water molecules using 4 electrons from cytochrome c in the IMS and 4 protons from the mitochondrial matrix. This is Cytochrome c oxidase subunit 2 (COII) from Apis florea (Dwarf honeybee).